We begin with the raw amino-acid sequence, 449 residues long: Cyclin-B1-5 (449 aa).

2 disordered regions span residues 1-37 (MATRHQRAAAAPQPANRGAAVAAGKQKAAATAAAGRP) and 98-147 (PARK…GGSA). Composition is skewed to low complexity over residues 8-37 (AAAAPQPANRGAAVAAGKQKAAATAAAGRP) and 136-147 (SEGAGSSSGGSA).

It belongs to the cyclin family. Cyclin AB subfamily.

The sequence is that of Cyclin-B1-5 (CYCB1-5) from Oryza sativa subsp. japonica (Rice).